Reading from the N-terminus, the 153-residue chain is General odorant-binding protein lush (153 aa).

Residues 1-29 (MKHWKRRSSAVFAIVLQVLVLLLPDPAVA) form the signal peptide. Cystine bridges form between Cys46/Cys79, Cys75/Cys132, and Cys121/Cys141. Ser81 and Thr86 together coordinate 1-propanol. Butan-1-ol-binding residues include Ser81 and Thr86. Residues Ser81 and Thr86 each contribute to the ethanol site.

The protein belongs to the PBP/GOBP family. As to expression, specifically expressed in chemosensory system in both males and females. Expressed in a subset of trichoid chemosensory sensilla located on the ventral-lateral surface of the third antennal segment. Secreted from non-neuronal support cells into the sensillum lymph that bathes the olfactory neurons within these sensilla.

The protein resides in the secreted. Its function is as follows. Odorant-binding protein required for olfactory behavior and for activity of pheromone-sensitive neurons. Binds to alcohols and mediates avoidance behavior to high concentrations of alcohols, the alcohol-binding possibly resulting in activation of receptors on T2B neurons, the activation of these receptors inhibiting these neurons. Acts in concert with Snmp and lush to capture cVA molecules on the surface of Or67d expressing olfactory dendrites and facilitate their transfer to the odorant-receptor Orco complex. Required for cVA response, probably by binding to VA. May act by serving as an adapter that bridges the presence of gaseous pheromone molecules, cVA, to activation of specific neuronal receptors expressed on T1 olfactory neurons, possibly via a specific conformational change induced by cVA that in turn activates T1 receptors. T1 neurons are excited by the pheromone VA, while T2 neurons are inhibited by alcohols. Also binds to phthalates. The chain is General odorant-binding protein lush (lush) from Drosophila melanogaster (Fruit fly).